Consider the following 200-residue polypeptide: Large ribosomal subunit protein uL4 (200 aa).

Residues 43-67 (RAQKTRAEVSGSGKKPWRQKGTGRA) are disordered.

It belongs to the universal ribosomal protein uL4 family. As to quaternary structure, part of the 50S ribosomal subunit.

One of the primary rRNA binding proteins, this protein initially binds near the 5'-end of the 23S rRNA. It is important during the early stages of 50S assembly. It makes multiple contacts with different domains of the 23S rRNA in the assembled 50S subunit and ribosome. In terms of biological role, forms part of the polypeptide exit tunnel. This chain is Large ribosomal subunit protein uL4, found in Haemophilus influenzae (strain PittEE).